The primary structure comprises 190 residues: Surfactant protein C (190 aa).

Residues 1 to 24 (MDVGSKEVLMESPPDYTAVPGGRL) constitute a propeptide that is removed on maturation. Residues C28 and C29 are each lipidated (S-palmitoyl cysteine). A propeptide spanning residues 59 to 190 (HMSQKHTEMV…LCGEVPLYYT (132 aa)) is cleaved from the precursor. A BRICHOS domain is found at 94–190 (FSIGSTGTVV…LCGEVPLYYT (97 aa)). An intrachain disulfide couples C121 to C182.

It localises to the secreted. It is found in the extracellular space. Its subcellular location is the surface film. Its function is as follows. Pulmonary surfactant associated proteins promote alveolar stability by lowering the surface tension at the air-liquid interface in the peripheral air spaces. The polypeptide is Surfactant protein C (SFTPC) (Bos taurus (Bovine)).